The primary structure comprises 405 residues: Cytoplasmic tRNA 2-thiolation protein 2 (405 aa).

Belongs to the CTU2/NCS2 family.

It localises to the cytoplasm. It participates in tRNA modification; 5-methoxycarbonylmethyl-2-thiouridine-tRNA biosynthesis. Plays a central role in 2-thiolation of mcm(5)S(2)U at tRNA wobble positions of tRNA(Lys), tRNA(Glu) and tRNA(Gln). May act by forming a heterodimer with NCS6/CTU1 that ligates sulfur from thiocarboxylated URM1 onto the uridine of tRNAs at wobble position. The protein is Cytoplasmic tRNA 2-thiolation protein 2 of Drosophila persimilis (Fruit fly).